Here is a 254-residue protein sequence, read N- to C-terminus: Hydroxyethylthiazole kinase (254 aa).

Residue methionine 40 coordinates substrate. ATP-binding residues include arginine 116 and serine 162. Substrate is bound at residue glycine 189.

It belongs to the Thz kinase family. Requires Mg(2+) as cofactor.

The enzyme catalyses 5-(2-hydroxyethyl)-4-methylthiazole + ATP = 4-methyl-5-(2-phosphooxyethyl)-thiazole + ADP + H(+). It participates in cofactor biosynthesis; thiamine diphosphate biosynthesis; 4-methyl-5-(2-phosphoethyl)-thiazole from 5-(2-hydroxyethyl)-4-methylthiazole: step 1/1. Catalyzes the phosphorylation of the hydroxyl group of 4-methyl-5-beta-hydroxyethylthiazole (THZ). The sequence is that of Hydroxyethylthiazole kinase from Limosilactobacillus fermentum (strain NBRC 3956 / LMG 18251) (Lactobacillus fermentum).